We begin with the raw amino-acid sequence, 378 residues long: Cytochrome b (378 aa).

Transmembrane regions (helical) follow at residues 34-54 (FGSLLGLCLMLQILTGLFLAM), 78-99 (WFLRICHANGASFFFACLFMHV), 114-134 (WNTGVIILFLTMATGFLGYVL), and 179-199 (FFTFHFIFPFIILALMMIHLL). 2 residues coordinate heme b: H84 and H98. Heme b is bound by residues H183 and H197. H202 is a binding site for a ubiquinone. The next 4 membrane-spanning stretches (helical) occupy residues 227–247 (YKDIFGFIVFYWILIRFIWKF), 289–309 (LGGVIALVLSIAILLILPFTH), 321–341 (LNQILFWNMVVVASLLTWIGA), and 348–368 (YVLTGQILTVLYFSYFIINPL).

Belongs to the cytochrome b family. The main subunits of complex b-c1 are: cytochrome b, cytochrome c1 and the Rieske protein. Requires heme b as cofactor.

It is found in the mitochondrion inner membrane. Its function is as follows. Component of the ubiquinol-cytochrome c reductase complex (complex III or cytochrome b-c1 complex) that is part of the mitochondrial respiratory chain. The b-c1 complex mediates electron transfer from ubiquinol to cytochrome c. Contributes to the generation of a proton gradient across the mitochondrial membrane that is then used for ATP synthesis. This chain is Cytochrome b (MT-CYB), found in Anopheles quadrimaculatus (Common malaria mosquito).